Here is a 152-residue protein sequence, read N- to C-terminus: Ribosome maturation factor RimP (152 aa).

The protein belongs to the RimP family.

The protein localises to the cytoplasm. Functionally, required for maturation of 30S ribosomal subunits. The chain is Ribosome maturation factor RimP from Burkholderia cenocepacia (strain ATCC BAA-245 / DSM 16553 / LMG 16656 / NCTC 13227 / J2315 / CF5610) (Burkholderia cepacia (strain J2315)).